The primary structure comprises 204 residues: Large ribosomal subunit protein bL25 (204 aa).

The protein belongs to the bacterial ribosomal protein bL25 family. CTC subfamily. In terms of assembly, part of the 50S ribosomal subunit; part of the 5S rRNA/L5/L18/L25 subcomplex. Contacts the 5S rRNA. Binds to the 5S rRNA independently of L5 and L18.

This is one of the proteins that binds to the 5S RNA in the ribosome where it forms part of the central protuberance. The protein is Large ribosomal subunit protein bL25 of Pseudoalteromonas translucida (strain TAC 125).